The sequence spans 395 residues: DNA primase small subunit PriS (395 aa).

Residues aspartate 95, aspartate 97, and aspartate 302 contribute to the active site.

Belongs to the eukaryotic-type primase small subunit family. In terms of assembly, heterodimer of a small subunit (PriS) and a large subunit (PriL). The cofactor is Mg(2+). It depends on Mn(2+) as a cofactor.

Its function is as follows. Catalytic subunit of DNA primase, an RNA polymerase that catalyzes the synthesis of short RNA molecules used as primers for DNA polymerase during DNA replication. The small subunit contains the primase catalytic core and has DNA synthesis activity on its own. Binding to the large subunit stabilizes and modulates the activity, increasing the rate of DNA synthesis while decreasing the length of the DNA fragments, and conferring RNA synthesis capability. The DNA polymerase activity may enable DNA primase to also catalyze primer extension after primer synthesis. May also play a role in DNA repair. The protein is DNA primase small subunit PriS of Methanothrix thermoacetophila (strain DSM 6194 / JCM 14653 / NBRC 101360 / PT) (Methanosaeta thermophila).